The chain runs to 352 residues: Transcription factor RSL2 (352 aa).

Residues 160-169 are compositionally biased toward polar residues; sequence SVTTTKSLTG. Residues 160–277 form a disordered region; sequence SVTTTKSLTG…ASRGAATDPQ (118 aa). The span at 183 to 192 shows a compositional bias: basic residues; the sequence is KRARVNKRAQ. Positions 223-232 are enriched in polar residues; that stretch reads SRQNSSTTFC. Residues 272 to 285 form a basic motif region; the sequence is AATDPQSLYARKRR. One can recognise a bHLH domain in the interval 272 to 321; that stretch reads AATDPQSLYARKRRERINERLRILQNLVPNGTKVDISTMLEEAVHYVKFL. Positions 286–321 are helix-loop-helix motif; it reads ERINERLRILQNLVPNGTKVDISTMLEEAVHYVKFL.

In terms of assembly, homodimer. As to expression, expressed in roots. Expressed in root epidermal hair cells.

It localises to the nucleus. Functionally, transcription factor involved in the regulation of root hair elongation. Does not seem to be a direct transcriptional target of RHD6 and RSL1. Involved in the regulation of root hair elongation in response to low phosphate. The chain is Transcription factor RSL2 from Arabidopsis thaliana (Mouse-ear cress).